The sequence spans 131 residues: Increased copper sensitivity protein 3 (131 aa).

Helical transmembrane passes span Ile-35–Ser-55 and Ile-74–Phe-94.

The protein localises to the membrane. The polypeptide is Increased copper sensitivity protein 3 (ICS3) (Saccharomyces cerevisiae (strain ATCC 204508 / S288c) (Baker's yeast)).